An 892-amino-acid polypeptide reads, in one-letter code: MSVDQDVVDEAYQYYAEDKRQISDKARKFIEFIDPILRKYSKLFRYYQNFAKFTLEYYYKLFYPFLEKLPENVVEDLKRQIINEIMSNPNQSIRDVLAKAVQKEAQRIEEQLQRRPQRAKQQPQKTKTSEVANQRVSRSAENQGKRGNEEKQQQKTPGKTEEASGAEQESGEEGNQQEESGEEQEGVKGSRSKQREEQEEEVSESEGKQSEESGESESEEGQSSEETQLSSSGEGNQQEEGKGGEGEGAETEEGGRRGEAESEQEEGEETGNGQESSGEAQNGGESGESEGEITESESASEEQTGSKGKSGQQGEEGQQQSGSEGEEGAEQEESGEEGNQQEGVGKQKKRSSRGQESEAGEEPGSAPEETQLSSGEEEAGQESGGETGSEQGFGEEGEQGQESETTGKQKGKKREATESGGGAESESEEGQSPEETQEGGEGGAETEEGGQGSEAEGTAAEGEVGQPSEQGVSSSTGSGQRSEGSEASEEQNAGESGEGSESEGAESIAGEQTGSSSESAGSEQLGSQQGELSLEEGGRGYAHGDEDLLSSPQEINSILQTLSQLRDTVQQLRNYDFYSNAIDERTFDDQNVSEHRKEKEIENLYDTANNVQKLLKDLNVSEGEQNKILQELVTQYSLRRLLGNIATKYKGLLDFVRNKGESEVESRHGSGKGPSSTMGDDLSRLFIKEYAKLSNPIQQKMFLLDYLNGALSIHKSEEKKQGDFLFVIDSSGSMEGNKIATALAIPLVTYKKYKGKRNILVETFSDEPSPIYNIKNIANVLGSMKFGGTNIGSAVLYALKNIDKPDSDYDRKLRESLRKTRTLILLTDGEDEIPDDIAREINSLKKKNKVELLCYGIDLGERGLKTLKEICDEVYAVGSNNFGNIVLKRLVH.

Residues 109-548 form a disordered region; sequence EEQLQRRPQR…RGYAHGDEDL (440 aa). Polar residues predominate over residues 129-142; the sequence is SEVANQRVSRSAEN. The segment covering 143–162 has biased composition (basic and acidic residues); it reads QGKRGNEEKQQQKTPGKTEE. Positions 169–184 are enriched in acidic residues; the sequence is ESGEEGNQQEESGEEQ. Positions 185 to 196 are enriched in basic and acidic residues; it reads EGVKGSRSKQRE. Residues 212-223 show a composition bias toward acidic residues; it reads ESGESESEEGQS. Composition is skewed to low complexity over residues 224-238 and 271-283; these read SEETQLSSSGEGNQQ and GNGQESSGEAQNG. Acidic residues predominate over residues 287-300; it reads GESEGEITESESAS. Over residues 301–323 the composition is skewed to low complexity; the sequence is EEQTGSKGKSGQQGEEGQQQSGS. Acidic residues-rich tracts occupy residues 324–336 and 425–448; these read EGEEGAEQEESGE and SESEEGQSPEETQEGGEGGAETEE. Positions 453–466 are enriched in low complexity; it reads SEAEGTAAEGEVGQ. Polar residues-rich tracts occupy residues 467 to 481 and 512 to 531; these read PSEQGVSSSTGSGQR and QTGSSSESAGSEQLGSQQGE. Positions 536–546 are enriched in basic and acidic residues; sequence EGGRGYAHGDE. Residues 553 to 620 adopt a coiled-coil conformation; the sequence is QEINSILQTL…VQKLLKDLNV (68 aa). The VWFA domain occupies 723–892; the sequence is DFLFVIDSSG…GNIVLKRLVH (170 aa).

In Acidianus two-tailed virus (ATV), this protein is Putative VWFA domain-containing protein ORF892.